Reading from the N-terminus, the 239-residue chain is Phosphoribosylaminoimidazole-succinocarboxamide synthase (239 aa).

Belongs to the SAICAR synthetase family.

The catalysed reaction is 5-amino-1-(5-phospho-D-ribosyl)imidazole-4-carboxylate + L-aspartate + ATP = (2S)-2-[5-amino-1-(5-phospho-beta-D-ribosyl)imidazole-4-carboxamido]succinate + ADP + phosphate + 2 H(+). It functions in the pathway purine metabolism; IMP biosynthesis via de novo pathway; 5-amino-1-(5-phospho-D-ribosyl)imidazole-4-carboxamide from 5-amino-1-(5-phospho-D-ribosyl)imidazole-4-carboxylate: step 1/2. The sequence is that of Phosphoribosylaminoimidazole-succinocarboxamide synthase from Dichelobacter nodosus (strain VCS1703A).